A 262-amino-acid polypeptide reads, in one-letter code: MAIKEETNEFSQGNEGNSHSTNNNNNSNNSNSNNNADVSAPVDDDDDDDGTSQGKTQKERRKIEIKFIQEKSRRHITFSKRKAGIMKKAYELSVLTGTQVLLLVVSETGLVYTFTTPKLQPLVTKSEGKNLIQACLNAPEEGLGDDQENQSDGNTGDSPDQSPAPATNPNVMGAAGHAHHIQQQQQQQQQAQQQAQQQMAPMPSHGLPTHYSNPQGAGNPGVPPQQQGQHQPGIPLQGGYSDQYSYFGNIQNNNIPNQQQYQ.

2 disordered regions span residues M1–K62 and E140–Q262. The span at N17–N35 shows a compositional bias: low complexity. An MADS-box domain is found at K58–K118. Residues Q150–N170 show a composition bias toward polar residues. 3 stretches are compositionally biased toward low complexity: residues Q182 to Q198, P224 to G239, and N249 to Q262.

As to quaternary structure, interacts with AHR1.

It localises to the nucleus. Functionally, transcription factor that is recruited by AHR1 to the promoters of genes involved in biofilm formation, which include several key adhesion genes. Plays an important role in cell adhesion, hyphal growth and virulence. Implicated in the regulation of opaque-phase-specific gene expression. In Candida albicans (strain SC5314 / ATCC MYA-2876) (Yeast), this protein is Transcription factor of morphogenesis MCM1 (MCM1).